The chain runs to 62 residues: uncharacterized protein (62 aa).

This is an uncharacterized protein from Bacillus subtilis (strain 168).